A 424-amino-acid polypeptide reads, in one-letter code: Phosphoribosylamine--glycine ligase (424 aa).

Residues 111–312 (KAFVKECGIK…LLDLFLATAK (202 aa)) enclose the ATP-grasp domain. An ATP-binding site is contributed by 137–189 (IQNASFPLVIKALNKNTSIVHHQEEALKILEDALKQSNEPVIIEPFLEGFELS).

The protein belongs to the GARS family.

It carries out the reaction 5-phospho-beta-D-ribosylamine + glycine + ATP = N(1)-(5-phospho-beta-D-ribosyl)glycinamide + ADP + phosphate + H(+). It functions in the pathway purine metabolism; IMP biosynthesis via de novo pathway; N(1)-(5-phospho-D-ribosyl)glycinamide from 5-phospho-alpha-D-ribose 1-diphosphate: step 2/2. The chain is Phosphoribosylamine--glycine ligase (purD) from Helicobacter pylori (strain J99 / ATCC 700824) (Campylobacter pylori J99).